The primary structure comprises 483 residues: Replication factor C large subunit (483 aa).

44–51 (GSPGVGKT) is a binding site for ATP. The interval 415 to 483 (AVDHGGGIFA…DGQAGLSDFM (69 aa)) is disordered. The segment covering 430 to 443 (AQSDTESDDDDDGD) has biased composition (acidic residues). Basic and acidic residues predominate over residues 451 to 463 (DEPKEESVNREQS).

Belongs to the activator 1 small subunits family. RfcL subfamily. In terms of assembly, heteromultimer composed of small subunits (RfcS) and large subunits (RfcL).

Part of the RFC clamp loader complex which loads the PCNA sliding clamp onto DNA. The polypeptide is Replication factor C large subunit (Natronomonas pharaonis (strain ATCC 35678 / DSM 2160 / CIP 103997 / JCM 8858 / NBRC 14720 / NCIMB 2260 / Gabara) (Halobacterium pharaonis)).